Consider the following 153-residue polypeptide: Endoribonuclease YbeY (153 aa).

3 residues coordinate Zn(2+): His115, His119, and His125.

Belongs to the endoribonuclease YbeY family. The cofactor is Zn(2+).

The protein resides in the cytoplasm. In terms of biological role, single strand-specific metallo-endoribonuclease involved in late-stage 70S ribosome quality control and in maturation of the 3' terminus of the 16S rRNA. This chain is Endoribonuclease YbeY, found in Blochmanniella floridana.